A 575-amino-acid polypeptide reads, in one-letter code: Urease subunit alpha (575 aa).

The 439-residue stretch at Gly-137–Phe-575 folds into the Urease domain. His-142, His-144, and Lys-225 together coordinate Ni(2+). Lys-225 is modified (N6-carboxylysine). Residue His-227 coordinates substrate. The Ni(2+) site is built by His-254 and His-280. His-328 (proton donor) is an active-site residue. Residue Asp-368 participates in Ni(2+) binding.

The protein belongs to the metallo-dependent hydrolases superfamily. Urease alpha subunit family. In terms of assembly, heterotrimer of UreA (gamma), UreB (beta) and UreC (alpha) subunits. Three heterotrimers associate to form the active enzyme. The cofactor is Ni cation. Post-translationally, carboxylation allows a single lysine to coordinate two nickel ions.

Its subcellular location is the cytoplasm. It catalyses the reaction urea + 2 H2O + H(+) = hydrogencarbonate + 2 NH4(+). Its pathway is nitrogen metabolism; urea degradation; CO(2) and NH(3) from urea (urease route): step 1/1. This Leptothrix cholodnii (strain ATCC 51168 / LMG 8142 / SP-6) (Leptothrix discophora (strain SP-6)) protein is Urease subunit alpha.